We begin with the raw amino-acid sequence, 291 residues long: Bifunctional protein FolD (291 aa).

Residues 166-168, I191, and I232 contribute to the NADP(+) site; that span reads GAG.

It belongs to the tetrahydrofolate dehydrogenase/cyclohydrolase family. In terms of assembly, homodimer.

The catalysed reaction is (6R)-5,10-methylene-5,6,7,8-tetrahydrofolate + NADP(+) = (6R)-5,10-methenyltetrahydrofolate + NADPH. The enzyme catalyses (6R)-5,10-methenyltetrahydrofolate + H2O = (6R)-10-formyltetrahydrofolate + H(+). The protein operates within one-carbon metabolism; tetrahydrofolate interconversion. Catalyzes the oxidation of 5,10-methylenetetrahydrofolate to 5,10-methenyltetrahydrofolate and then the hydrolysis of 5,10-methenyltetrahydrofolate to 10-formyltetrahydrofolate. This is Bifunctional protein FolD from Aquifex aeolicus (strain VF5).